The following is a 393-amino-acid chain: Pre-mRNA splicing factor SR-like 1 (393 aa).

The tract at residues 173–393 (MNLPTKPSGS…VIKLGGSSWR (221 aa)) is disordered. The segment covering 249–312 (QSRDYYSDRD…RNDYEDDRSR (64 aa)) has biased composition (basic and acidic residues). Positions 301-308 (SRRNDYED) match the Nuclear localization signal motif. Basic residues predominate over residues 313–325 (HDRRSRSRSRSRS). Composition is skewed to basic and acidic residues over residues 329–346 (QIER…KEKS) and 356–385 (KLKD…EEVI).

It belongs to the PRP38 family. Phosphorylated. In terms of tissue distribution, mostly expressed in siliques and leaves, also present in seedlings, flowers and stems, and, at low levels, in roots.

It localises to the nucleus. In terms of biological role, may be required for pre-mRNA splicing. Confers salt tolerance to LiCl and NaCl. This is Pre-mRNA splicing factor SR-like 1 from Arabidopsis thaliana (Mouse-ear cress).